The following is a 251-amino-acid chain: Probable transcriptional regulatory protein Franean1_5147 (251 aa).

This sequence belongs to the TACO1 family.

The protein resides in the cytoplasm. The chain is Probable transcriptional regulatory protein Franean1_5147 from Parafrankia sp. (strain EAN1pec).